A 298-amino-acid polypeptide reads, in one-letter code: Acetyl-coenzyme A carboxylase carboxyl transferase subunit beta (298 aa).

The tract at residues 1-21 (MNQEVKSGKVLSPSTPWTQRP) is disordered. A C4-type zinc finger spans residues 20-67 (RPVPGIEVADEQQTLKATFTEPTIECPECHALVTRTAISFNAYVCPQC). One can recognise a CoA carboxyltransferase N-terminal domain in the interval 41–298 (PTIECPECHA…RLVSKLMNLP (258 aa)). Positions 45, 48, 64, and 67 each coordinate Zn(2+).

Belongs to the AccD/PCCB family. As to quaternary structure, acetyl-CoA carboxylase is a heterohexamer composed of biotin carboxyl carrier protein (AccB), biotin carboxylase (AccC) and two subunits each of ACCase subunit alpha (AccA) and ACCase subunit beta (AccD). Zn(2+) is required as a cofactor.

The protein resides in the cytoplasm. It carries out the reaction N(6)-carboxybiotinyl-L-lysyl-[protein] + acetyl-CoA = N(6)-biotinyl-L-lysyl-[protein] + malonyl-CoA. Its pathway is lipid metabolism; malonyl-CoA biosynthesis; malonyl-CoA from acetyl-CoA: step 1/1. Component of the acetyl coenzyme A carboxylase (ACC) complex. Biotin carboxylase (BC) catalyzes the carboxylation of biotin on its carrier protein (BCCP) and then the CO(2) group is transferred by the transcarboxylase to acetyl-CoA to form malonyl-CoA. The sequence is that of Acetyl-coenzyme A carboxylase carboxyl transferase subunit beta from Acinetobacter baumannii (strain SDF).